The sequence spans 546 residues: MKNINPMKTHAWKKLQNHFFDVKNIYIKDFFCLDKNRFANFSVFFKDFMLIDFSKNRISSQTLKLLFQLAQECYLDDAIKNMFLGKIINKTENRPVLHVALRNRLNNKIILNNIDIMNEIQIELKKIKCFSESIIDGSWKGFTGKSISDVVNIGIGGSYLGPYMITEALKIYKNHLNIHYISNIDGTEISEVLKKINLETTIFLIASKSFSTDETISNANYLKKWCILKTNYKKYFSKHFFALCENIKTAINFGIKYENIFKFWDWVGGRYSLWSSSGLSIVLSIGFKNFESLLYGAYLMDQHFLHTKISKNIPIILALISIWYTNFFNTETEAIFPYDKYLHVLPEYLQQSYMESNGKSIDRNGKLVTWNTCPIIWGSTGTNGQHSFFQLLHQGTTMVPCDFIIPAISHNLINDHHKKLLSNFLAQTASLAFGNINKDIMNMNLKYSSENFIFSHKTYFGNKPSNSIFLKKITPISLGSLIALYEHKIFVQGVILNIFSFDQWGVELGKTVANNIYNNLFKKKKINVYDCSTIGLINLYKYWNRI.

Catalysis depends on Glu-355, which acts as the Proton donor. Residues His-386 and Lys-510 contribute to the active site.

It belongs to the GPI family.

It localises to the cytoplasm. The enzyme catalyses alpha-D-glucose 6-phosphate = beta-D-fructose 6-phosphate. The protein operates within carbohydrate biosynthesis; gluconeogenesis. It participates in carbohydrate degradation; glycolysis; D-glyceraldehyde 3-phosphate and glycerone phosphate from D-glucose: step 2/4. In terms of biological role, catalyzes the reversible isomerization of glucose-6-phosphate to fructose-6-phosphate. In Buchnera aphidicola subsp. Cinara cedri (strain Cc), this protein is Glucose-6-phosphate isomerase.